The sequence spans 243 residues: Nuclear ubiquitous casein and cyclin-dependent kinase substrate 1 (243 aa).

A disordered region spans residues 1-243 (MSRPVRNRKV…SEDDAQSGED (243 aa)). A Phosphotyrosine modification is found at Tyr-13. Phosphoserine occurs at positions 14 and 19. Tyr-26 is modified (phosphotyrosine). The span at 35-51 (KKIRSSPREAKNKRRSG) shows a compositional bias: basic residues. 6 positions are modified to phosphoserine: Ser-54, Ser-58, Ser-61, Ser-73, Ser-75, and Ser-79. The span at 64–77 (KDVKTKKDDSHSAE) shows a compositional bias: basic and acidic residues. The span at 91 to 100 (QQRQAASKAA) shows a compositional bias: low complexity. A compositionally biased stretch (acidic residues) spans 111-124 (VGSEEEQEEEDEAP). Residues Ser-113, Ser-130, Ser-132, and Ser-144 each carry the phosphoserine modification. Positions 132 to 145 (SDEDFLVEDDDDSD) are enriched in acidic residues. Over residues 149-174 (SKKKNKKMVKKSKPERKEKKMPKPRL) the composition is skewed to basic residues. Thr-179 carries the post-translational modification Phosphothreonine. Residue Ser-181 is modified to Phosphoserine. Over residues 197-206 (ASKEKTPSPK) the composition is skewed to basic and acidic residues. Thr-202 carries the post-translational modification Phosphothreonine. 6 positions are modified to phosphoserine: Ser-204, Ser-214, Ser-223, Ser-229, Ser-234, and Ser-240. Acidic residues predominate over residues 232–243 (EGSEDDAQSGED).

As to quaternary structure, does not interact with RAD51. Post-translationally, phosphorylated in an ATM-dependent manner in response to DNA damage. Phosphorylated by CDK1 and casein kinase.

Its subcellular location is the nucleus. It localises to the chromosome. In terms of biological role, chromatin-associated protein involved in DNA repair by promoting homologous recombination (HR). Binds double-stranded DNA (dsDNA) and secondary DNA structures, such as D-loop structures, but with less affinity than RAD51AP1. This chain is Nuclear ubiquitous casein and cyclin-dependent kinase substrate 1 (NUCKS1), found in Bos taurus (Bovine).